The sequence spans 305 residues: 2-oxoacid:ferredoxin oxidoreductase subunit beta (305 aa).

[4Fe-4S] cluster is bound by residues C12, C15, and C46. Thiamine diphosphate is bound by residues I44 to S47 and H65. Position 90 (D90) interacts with Mg(2+). G91–D92 contributes to the thiamine diphosphate binding site. The Mg(2+) site is built by N118 and V120. G122–L123 lines the thiamine diphosphate pocket. C197 provides a ligand contact to [4Fe-4S] cluster.

As to quaternary structure, heterodimer composed of an alpha and a beta subunit. It depends on [4Fe-4S] cluster as a cofactor. The cofactor is thiamine diphosphate. Requires Mg(2+) as cofactor.

Its subcellular location is the cytoplasm. The enzyme catalyses a 2-oxocarboxylate + 2 oxidized [2Fe-2S]-[ferredoxin] + CoA = an acyl-CoA + 2 reduced [2Fe-2S]-[ferredoxin] + CO2 + H(+). Catalyzes the coenzyme A-dependent oxidative decarboxylation of different 2-oxoacids such as 2-oxoglutarate, pyruvate and 2-oxobutyrate to form their CoA derivatives. The sequence is that of 2-oxoacid:ferredoxin oxidoreductase subunit beta from Sulfolobus sp.